The primary structure comprises 545 residues: O-phosphoserine--tRNA(Cys) ligase (545 aa).

Residues 189 to 191 (HMT), 234 to 236 (SAS), 276 to 277 (YY), and asparagine 328 contribute to the substrate site.

This sequence belongs to the class-II aminoacyl-tRNA synthetase family. O-phosphoseryl-tRNA(Cys) synthetase subfamily. Homotetramer. Interacts with SepCysS.

The enzyme catalyses tRNA(Cys) + O-phospho-L-serine + ATP = O-phospho-L-seryl-tRNA(Cys) + AMP + diphosphate. Functionally, catalyzes the attachment of O-phosphoserine (Sep) to tRNA(Cys). The sequence is that of O-phosphoserine--tRNA(Cys) ligase from Methanothrix thermoacetophila (strain DSM 6194 / JCM 14653 / NBRC 101360 / PT) (Methanosaeta thermophila).